A 466-amino-acid polypeptide reads, in one-letter code: Asparagine--tRNA ligase (466 aa).

The protein belongs to the class-II aminoacyl-tRNA synthetase family. In terms of assembly, homodimer.

It is found in the cytoplasm. The enzyme catalyses tRNA(Asn) + L-asparagine + ATP = L-asparaginyl-tRNA(Asn) + AMP + diphosphate + H(+). This chain is Asparagine--tRNA ligase, found in Colwellia psychrerythraea (strain 34H / ATCC BAA-681) (Vibrio psychroerythus).